We begin with the raw amino-acid sequence, 412 residues long: Histidine--tRNA ligase (412 aa).

It belongs to the class-II aminoacyl-tRNA synthetase family. In terms of assembly, homodimer.

It localises to the cytoplasm. It catalyses the reaction tRNA(His) + L-histidine + ATP = L-histidyl-tRNA(His) + AMP + diphosphate + H(+). This is Histidine--tRNA ligase from Maridesulfovibrio salexigens (strain ATCC 14822 / DSM 2638 / NCIMB 8403 / VKM B-1763) (Desulfovibrio salexigens).